We begin with the raw amino-acid sequence, 107 residues long: Small integral membrane protein 19 (107 aa).

A helical transmembrane segment spans residues 25-43; the sequence is ATNVYLIVILVSFGLFMYA. The tract at residues 88–107 is disordered; that stretch reads RKYEYQQPQSQADSVQLSLE. The segment covering 93-107 has biased composition (polar residues); it reads QQPQSQADSVQLSLE.

It belongs to the SMIM19 family.

Its subcellular location is the membrane. In Mus musculus (Mouse), this protein is Small integral membrane protein 19 (Smim19).